Here is a 300-residue protein sequence, read N- to C-terminus: MNFQGLVLTDNCKNQWVVGPLIGKGGFGSIYTTNDNNYVVKIEPKANGSLFTEQAFYTRVLKPSVIEEWKKSHHISHVGVITCKAFGLYKSINTEYRFLVINRLGVDLDAVIRANNNRLPKRSVMLVGIEILNTIQFMHEQGYSHGNIKASNIVLDQMDKNKLYLVDYGLVSKFMSNGEHVPFIRNPNKMDNGTLEFTPIDSHKGYVVSRRGDLETLGYCMIRWLGGILPWTKIAETKNCALVSATKQKYVNNTTTLLMTSLQYAPRELLQYITMVNSLTYFEEPNYDKFRHILMQGAYY.

In terms of domain architecture, Protein kinase spans 16–282; it reads WVVGPLIGKG…ITMVNSLTYF (267 aa). Residues 22–30 and K45 each bind ATP; that span reads IGKGGFGSI. N147 acts as the Proton acceptor in catalysis.

This sequence belongs to the protein kinase superfamily. Ser/Thr protein kinase family. Poxviruses subfamily. In terms of assembly, interacts with host JIP1; this interaction increases the amount of MAPK bound to JIP1 and subsequently increases the activity of transcription factors, such as JUN, that respond to these complexes. Interacts with protein OPG198; this interaction inhibits the repressive activity of OPG198 pseudokinase on viral replication factory formation. Requires Mg(2+) as cofactor. Autophosphorylated.

The protein resides in the virion. It localises to the host cytoplasm. It catalyses the reaction L-seryl-[protein] + ATP = O-phospho-L-seryl-[protein] + ADP + H(+). It carries out the reaction L-threonyl-[protein] + ATP = O-phospho-L-threonyl-[protein] + ADP + H(+). Functionally, essential serine/threonine-protein kinase that plays different role in the viral life cycle. Phosphorylates the host small ribosomal protein RACK1 thereby customizing the ribosomes to a state optimal for viral mRNAs (which contain poly-A leaders) but not for host mRNAs. Facilitates viral DNA replication by inhibiting host BANF1, a cellular host defense responsive to foreign DNA. Phosphorylates host BANF1 on serine and threonine residues; this leads to BANF1 relocalization to the cytoplasm, loss of dimerization and impaired DNA binding activity. Indeed, BANF1 activity depends on its DNA-binding property which is blocked by VPK1-mediated phosphorylation. Required for viral intermediate genes expression, probably by inhibiting host BANF1. Modulates cellular responses via host JUN by two different mechanisms, either by direct phosphorylation or by modulation of upstream JIP1-MAPK complexes. Seems to participate in the accumulation/processing of late proteins and thus in virion maturation. In addition, inhibits B12 repressive activity on viral DNA replication via a phosphorylation-dependent mechanism. This chain is B1 kinase (OPG187), found in Homo sapiens (Human).